Reading from the N-terminus, the 558-residue chain is Scarecrow-like protein 6 (558 aa).

Residues 19–90 (FSSSFPQPPS…GGDATTDEQC (72 aa)) are disordered. The span at 54-75 (SVLDSLISPTSSSTVSSSHGGN) shows a compositional bias: low complexity. The GRAS domain occupies 196–554 (KRLNPGPVGI…TELVGVSAWR (359 aa)). The leucine repeat I (LRI) stretch occupies residues 203 to 257 (VGITEQLVKAAEVIESDTCLAQGILARLNQQLSSPVGKPLERAAFYFKEALNNLL). The VHIID stretch occupies residues 276–340 (YKSFSEISPV…DNAAPLSLKI (65 aa)). A VHIID motif is present at residues 307–311 (LHIID). The segment at 356 to 388 (FTQDNLKHFASEINISLDIQVLSLDLLGSISWP) is leucine repeat II (LRII). The segment at 396–479 (VAVNISAASF…RFLIQPEIEK (84 aa)) is PFYRE. Residues 482–554 (LDRSRPIERP…TELVGVSAWR (73 aa)) are SAW.

Belongs to the GRAS family. As to quaternary structure, interacts with Meloidogyne incognita 16D10. Expressed in seedlings, roots, leaves, flowers and siliques.

It localises to the nucleus. Its function is as follows. Probable transcription factor involved in plant development. The chain is Scarecrow-like protein 6 (SCL6) from Arabidopsis thaliana (Mouse-ear cress).